Consider the following 899-residue polypeptide: Receptor-like protein kinase At3g21340 (899 aa).

An N-terminal signal peptide occupies residues 1-27 (MEYHPQAIRLCALIFISFYALLHLVEA). The Extracellular portion of the chain corresponds to 28–522 (QDQKGFISLD…GAKKMNVVIP (495 aa)). Residues Asn-100, Asn-146, Asn-185, Asn-240, Asn-266, Asn-420, Asn-436, Asn-449, Asn-468, and Asn-475 are each glycosylated (N-linked (GlcNAc...) asparagine). LRR repeat units lie at residues 415–438 (IVTS…QNLT), 439–461 (HLQE…LADI), and 463–485 (SLLV…LLQK). Residues 523–543 (IVASVAFVVVLGSALAFFFIF) traverse the membrane as a helical segment. Over 544 to 899 (KKKKTSNSQD…FDIGATPDAR (356 aa)) the chain is Cytoplasmic. A Phosphothreonine modification is found at Thr-583. A Protein kinase domain is found at 592–865 (NNFERVLGKG…QVVIELNECL (274 aa)). ATP is bound by residues 598 to 606 (LGKGGFGMV) and Lys-620. The residue at position 665 (Tyr-665) is a Phosphotyrosine. Asp-717 functions as the Proton acceptor in the catalytic mechanism. Ser-751 bears the Phosphoserine mark. Thr-752 and Thr-757 each carry phosphothreonine. Tyr-765 carries the post-translational modification Phosphotyrosine.

It belongs to the protein kinase superfamily. Ser/Thr protein kinase family. Post-translationally, autophosphorylated on Tyr and Thr residues.

The protein localises to the cell membrane. The catalysed reaction is L-seryl-[protein] + ATP = O-phospho-L-seryl-[protein] + ADP + H(+). It carries out the reaction L-threonyl-[protein] + ATP = O-phospho-L-threonyl-[protein] + ADP + H(+). The enzyme catalyses L-tyrosyl-[protein] + ATP = O-phospho-L-tyrosyl-[protein] + ADP + H(+). Functionally, probable receptor with a dual specificity kinase activity acting on both serine/threonine- and tyrosine-containing substrates. This is Receptor-like protein kinase At3g21340 from Arabidopsis thaliana (Mouse-ear cress).